Here is a 317-residue protein sequence, read N- to C-terminus: Uridine phosphorylase 2 (317 aa).

Residues Gly66, Arg100, and 144–147 each bind phosphate; that span reads RIGT. A disulfide bond links Cys95 and Cys102. Uridine contacts are provided by residues 148–149 and 223–225; these read SG and QGR.

It belongs to the PNP/UDP phosphorylase family. As to quaternary structure, homodimer. In terms of tissue distribution, predominantly expressed in kidney.

It carries out the reaction uridine + phosphate = alpha-D-ribose 1-phosphate + uracil. The catalysed reaction is 2'-deoxyuridine + phosphate = 2-deoxy-alpha-D-ribose 1-phosphate + uracil. Its pathway is pyrimidine metabolism; UMP biosynthesis via salvage pathway; uracil from uridine (phosphorylase route): step 1/1. With respect to regulation, a conditional disulfide bridge can form within the protein that dislocates a critical phosphate-coordinating arginine Arg-100 away from the active site, disabling the enzyme. In terms of biological role, catalyzes the reversible phosphorylytic cleavage of uridine to uracil and ribose-1-phosphate which can then be utilized as carbon and energy sources or in the rescue of pyrimidine bases for nucleotide synthesis. Shows broad substrate specificity and can also accept deoxyuridine and other analogous compounds. This is Uridine phosphorylase 2 from Homo sapiens (Human).